Here is a 499-residue protein sequence, read N- to C-terminus: Lysine--tRNA ligase (499 aa).

Mg(2+) contacts are provided by Glu408 and Glu415.

The protein belongs to the class-II aminoacyl-tRNA synthetase family. Homodimer. It depends on Mg(2+) as a cofactor.

The protein localises to the cytoplasm. The catalysed reaction is tRNA(Lys) + L-lysine + ATP = L-lysyl-tRNA(Lys) + AMP + diphosphate. The chain is Lysine--tRNA ligase from Bacillus thuringiensis (strain Al Hakam).